Here is a 204-residue protein sequence, read N- to C-terminus: Holliday junction resolvase RecU (204 aa).

Mg(2+)-binding residues include T89, D91, D104, and Q123.

This sequence belongs to the RecU family. Requires Mg(2+) as cofactor.

It localises to the cytoplasm. The enzyme catalyses Endonucleolytic cleavage at a junction such as a reciprocal single-stranded crossover between two homologous DNA duplexes (Holliday junction).. In terms of biological role, endonuclease that resolves Holliday junction intermediates in genetic recombination. Cleaves mobile four-strand junctions by introducing symmetrical nicks in paired strands. Promotes annealing of linear ssDNA with homologous dsDNA. Required for DNA repair, homologous recombination and chromosome segregation. In Leuconostoc mesenteroides subsp. mesenteroides (strain ATCC 8293 / DSM 20343 / BCRC 11652 / CCM 1803 / JCM 6124 / NCDO 523 / NBRC 100496 / NCIMB 8023 / NCTC 12954 / NRRL B-1118 / 37Y), this protein is Holliday junction resolvase RecU.